A 214-amino-acid chain; its full sequence is MDWMWLLSGACIVFTLGMFSSGLSDLRVMVAKRSVENIQFLPFLTTDLNNLGWFYYGYLKGDGTLIIVNLIGASLQTLYMAAYILYSLERRYVVSQVLVSLGVLFLAHCYFTLWTPDINSRLNQLGLFCSIFTISMYLSPLADLAQIIKSKSTKCLSFPLTVATFLTSTSWVLYGWVQSDLYITVPNFPGIVTSLLRFWLFSRYPPDQPAYSLL.

7 helical membrane passes run 3-23 (WMWLLSGACIVFTLGMFSSGL), 38-58 (IQFLPFLTTDLNNLGWFYYGY), 65-85 (LIIVNLIGASLQTLYMAAYIL), 93-113 (VVSQVLVSLGVLFLAHCYFTL), 125-145 (LGLFCSIFTISMYLSPLADLA), 157-177 (SFPLTVATFLTSTSWVLYGWV), and 181-201 (LYITVPNFPGIVTSLLRFWLF). Residues 6 to 89 (LLSGACIVFT…MAAYILYSLE (84 aa)) enclose the MtN3/slv 1 domain. The MtN3/slv 2 domain maps to 124–207 (QLGLFCSIFT…FWLFSRYPPD (84 aa)).

Belongs to the SWEET sugar transporter family.

It is found in the golgi apparatus membrane. Its subcellular location is the cell membrane. Mediates sugar transport across membranes. In Xenopus tropicalis (Western clawed frog), this protein is Sugar transporter SWEET1 (slc50a1).